Here is a 364-residue protein sequence, read N- to C-terminus: Protein-glutamate methylesterase/protein-glutamine glutaminase 1 (364 aa).

Residues 6–123 form the Response regulatory domain; that stretch reads KVLCVDDSAL…RDGMLDYSEK (118 aa). D57 is subject to 4-aspartylphosphate. One can recognise a CheB-type methylesterase domain in the interval 165-357; sequence LVSTEKLIIV…RRIMARLASM (193 aa). Active-site residues include S177, H203, and D299.

Belongs to the CheB family. In terms of processing, phosphorylated by CheA. Phosphorylation of the N-terminal regulatory domain activates the methylesterase activity.

It is found in the cytoplasm. The catalysed reaction is [protein]-L-glutamate 5-O-methyl ester + H2O = L-glutamyl-[protein] + methanol + H(+). It carries out the reaction L-glutaminyl-[protein] + H2O = L-glutamyl-[protein] + NH4(+). Functionally, involved in chemotaxis. Part of a chemotaxis signal transduction system that modulates chemotaxis in response to various stimuli. Catalyzes the demethylation of specific methylglutamate residues introduced into the chemoreceptors (methyl-accepting chemotaxis proteins or MCP) by CheR. Also mediates the irreversible deamidation of specific glutamine residues to glutamic acid. The chain is Protein-glutamate methylesterase/protein-glutamine glutaminase 1 from Burkholderia mallei (strain ATCC 23344).